We begin with the raw amino-acid sequence, 569 residues long: TBCC domain-containing protein 1 (569 aa).

Residues proline 304–leucine 435 form the C-CAP/cofactor C-like domain.

The protein belongs to the TBCC family.

The protein resides in the cytoplasm. Its subcellular location is the cytoskeleton. It is found in the microtubule organizing center. The protein localises to the centrosome. It localises to the spindle pole. In terms of biological role, plays a role in the regulation of centrosome and Golgi apparatus positioning, with consequences on cell shape and cell migration. The sequence is that of TBCC domain-containing protein 1 (Tbccd1) from Rattus norvegicus (Rat).